The chain runs to 169 residues: Large ribosomal subunit protein uL5 (169 aa).

The protein belongs to the universal ribosomal protein uL5 family. In terms of assembly, part of the 50S ribosomal subunit; contacts the 5S rRNA and probably tRNA. Forms a bridge to the 30S subunit in the 70S ribosome.

In terms of biological role, this is one of the proteins that bind and probably mediate the attachment of the 5S RNA into the large ribosomal subunit, where it forms part of the central protuberance. In the 70S ribosome it contacts protein S13 of the 30S subunit (bridge B1b), connecting the 2 subunits; this bridge is implicated in subunit movement. May contact the P site tRNA; the 5S rRNA and some of its associated proteins might help stabilize positioning of ribosome-bound tRNAs. This chain is Large ribosomal subunit protein uL5, found in Methanosarcina barkeri (strain Fusaro / DSM 804).